Reading from the N-terminus, the 191-residue chain is Cathelicidin-related peptide Oh-Cath (191 aa).

The signal sequence occupies residues 1–22 (MEGFFWKTLLVVGALAIGGTSS). Positions 23-161 (LPHKPLTYEE…DQPRRVKRFK (139 aa)) are excised as a propeptide. Cystine bridges form between Cys81-Cys92 and Cys103-Cys120. A compositionally biased stretch (acidic residues) spans 125–151 (EEEEQKQEEGNEEEKEVEKEEKEEDEK). A disordered region spans residues 125–154 (EEEEQKQEEGNEEEKEVEKEEKEEDEKDQP).

The protein belongs to the cathelicidin family. In terms of tissue distribution, expressed by the venom gland.

The protein localises to the secreted. Its subcellular location is the target cell membrane. Functionally, potent antimicrobial peptide against Gram-negative (MIC=0.25 ug/ml against E.coli ATCC 25922, MIC=0.5 ug/ml against P.aeruginosa) and Gram-positive bacteria (MIC=64 ug/ml against E.faecalis, MIC=64 ug/ml against S.aureus). Adopts an amphipathic alpha helical conformation, that may allow to partition into the target membrane. Low hemolytic activities have been observed on mammalian cells. This is Cathelicidin-related peptide Oh-Cath from Ophiophagus hannah (King cobra).